Here is a 47-residue protein sequence, read N- to C-terminus: PhoP/PhoQ regulator MgrB (47 aa).

Residues 6-26 traverse the membrane as a helical segment; sequence WVILIIVALVCLLLWAQVFNI.

Belongs to the MgrB family. May form homooligomers. Probably interacts with the periplasmic domain of PhoQ.

Its subcellular location is the cell inner membrane. In terms of biological role, phoP-regulated transcription is redox-sensitive, being activated when the periplasm becomes more reducing. MgrB acts between DsbA/DsbB and PhoP/PhoQ in this pathway. Represses PhoP/PhoQ signaling, possibly by binding to the periplasmic domain of PhoQ, altering its activity and that of downstream effector PhoP. The polypeptide is PhoP/PhoQ regulator MgrB (Citrobacter koseri (strain ATCC BAA-895 / CDC 4225-83 / SGSC4696)).